Here is a 427-residue protein sequence, read N- to C-terminus: Enolase (427 aa).

Gln-162 serves as a coordination point for (2R)-2-phosphoglycerate. Glu-204 (proton donor) is an active-site residue. Residues Asp-241, Glu-282, and Asp-309 each coordinate Mg(2+). Lys-334, Arg-363, Ser-364, and Lys-385 together coordinate (2R)-2-phosphoglycerate. Catalysis depends on Lys-334, which acts as the Proton acceptor.

The protein belongs to the enolase family. Mg(2+) serves as cofactor.

Its subcellular location is the cytoplasm. The protein localises to the secreted. It localises to the cell surface. It catalyses the reaction (2R)-2-phosphoglycerate = phosphoenolpyruvate + H2O. The protein operates within carbohydrate degradation; glycolysis; pyruvate from D-glyceraldehyde 3-phosphate: step 4/5. In terms of biological role, catalyzes the reversible conversion of 2-phosphoglycerate (2-PG) into phosphoenolpyruvate (PEP). It is essential for the degradation of carbohydrates via glycolysis. In Parafrankia sp. (strain EAN1pec), this protein is Enolase.